The sequence spans 343 residues: Ornithine carbamoyltransferase, catabolic (343 aa).

Carbamoyl phosphate is bound at residue 62-65 (STRT). Residue H79 participates in Ni(2+) binding. Carbamoyl phosphate contacts are provided by residues Q89, R113, and 140–143 (HPTQ). Residues N172, D236, and 240-241 (SM) contribute to the L-ornithine site. Residues 278 to 279 (CL) and R323 each bind carbamoyl phosphate.

The protein belongs to the aspartate/ornithine carbamoyltransferase superfamily. OTCase family. Homohexamer; dimer of trimers. Ni(2+) serves as cofactor.

It is found in the cytoplasm. It catalyses the reaction carbamoyl phosphate + L-ornithine = L-citrulline + phosphate + H(+). It participates in amino-acid degradation; L-arginine degradation via ADI pathway; carbamoyl phosphate from L-arginine: step 2/2. Its function is as follows. Involved in the catabolism of arginine. Catalyzes the phosphorolysis of citrulline, the reverse reaction of the biosynthetic one, yielding ornithine and carbamoyl phosphate which serve to generate ATP from ADP. This is Ornithine carbamoyltransferase, catabolic from Lentilactobacillus hilgardii (Lactobacillus hilgardii).